Here is a 40-residue protein sequence, read N- to C-terminus: uncharacterized protein (40 aa).

A signal peptide spans 1 to 17 (MAVAALAMYGGTCGACA).

This is an uncharacterized protein from Archaeoglobus fulgidus (strain ATCC 49558 / DSM 4304 / JCM 9628 / NBRC 100126 / VC-16).